The primary structure comprises 44 residues: Defensin heliomicin (44 aa).

Intrachain disulfides connect cysteine 7–cysteine 32, cysteine 18–cysteine 40, and cysteine 22–cysteine 42.

The protein localises to the secreted. Its function is as follows. This peptide has potent anti-fungal activity. Has no activity against Gram-negative and Gram-positive bacteria. In Heliothis virescens (Tobacco budworm moth), this protein is Defensin heliomicin.